A 240-amino-acid chain; its full sequence is Transmembrane emp24 domain-containing protein 6 (240 aa).

A signal peptide spans 1-21; it reads MSPLLFGAGLVVLNLVTSARS. The Lumenal portion of the chain corresponds to 22–200; the sequence is QKTEPLSGSG…FFLIQSNYNY (179 aa). In terms of domain architecture, GOLD spans 53 to 138; sequence TECFWQFAHQ…SVQVYLNFGV (86 aa). 2 N-linked (GlcNAc...) asparagine glycosylation sites follow: asparagine 107 and asparagine 156. Residues 201–223 traverse the membrane as a helical segment; that stretch reads VNWWSTAQSLVIILSGILQLYFL. At 224–240 the chain is on the cytoplasmic side; sequence KRLFNVPTTTDTKKPRC.

The protein belongs to the EMP24/GP25L family.

The protein resides in the endoplasmic reticulum membrane. The protein is Transmembrane emp24 domain-containing protein 6 (TMED6) of Homo sapiens (Human).